Consider the following 588-residue polypeptide: MSTETELQVAVKTSAKKDSRKKGQDRSEATLIKRFKGEGVRYKAKLIGIDEVSAARGDKLCQDSMMKLKGVVAGARSKGEHKQKIFLTISFGGIKIFDEKTGALQHHHAVHEISYIAKDITDHRAFGYVCGKEGNHRFVAIKTAQAAEPVILDLRDLFQLIYELKQREELEKKAQKDKQCEQAVYQTILEEDVEDPVYQYIVFEAGHEPIRDPETEENIYQVPTSQKKEGVYDVPKSQPNSQPLEDFESRFAAATPNRNLSMDFDELLEATKVSAVTQLELFGDMSTPPDITSPPTPATPGDAFLPSSSQTLPGSADVFGSMSFGTAAVPSGYVAMGAVLPSFWGQQPLVQQQIAMGAQPPVAQVIPGAQPIAWGQPGLFPATQQAWPTVAGQFPPAAFMPTQTVMPLAAAMFQGPLTPLATVPGTNDSARSSPQSDKPRQKMGKESFKDFQMVQPPPVPSRKPDQPSLTCTSEAFSSYFNKVGVAQDTDDCDDFDISQLNLTPVTSTTPSTNSPPTPAPRQSSPSKSSASHVSDPTADDIFEEGFESPSKSEEQEAPDGSQASSTSDPFGEPSGEPSGDNISPQDGS.

The segment at methionine 1–arginine 26 is disordered. The segment covering alanine 15–arginine 26 has biased composition (basic and acidic residues). Residues lysine 36–leucine 189 enclose the PID domain. A phosphotyrosine mark is found at tyrosine 198, tyrosine 220, and tyrosine 232. 4 disordered regions span residues threonine 224 to proline 243, leucine 420 to glycine 444, phenylalanine 451 to threonine 470, and leucine 502 to serine 588. A compositionally biased stretch (polar residues) spans proline 424–serine 436. Composition is skewed to low complexity over residues threonine 503–threonine 512 and serine 523–serine 534. Serine 524 carries the phosphoserine; by CDK5 modification. The segment covering threonine 537–phenylalanine 546 has biased composition (acidic residues).

Associates with the SH2 domains of SRC, FYN and ABL. Interacts (phosphorylated on tyrosine residues) with CRK and CRKL (via respective SH2 domain). Interacts with SIAH1, LRP8 and VLDLR. Interacts with LRP1. Interacts with APLP1 (via NPXY motif). Interacts with DAB2IP. Interacts with ZSWIM8. Phosphorylated by FYN on Tyr-198 and Tyr-220 upon reelin induction in embryonic neurons. Also found phosphorylated on Tyr-232 upon reelin induction. Also phosphorylated on Ser-524 independently of reelin signaling. In terms of processing, ubiquitinated by various cullin-5-RING E3 ubiquitin-protein ligase complexes (ECS complexes) following ligand-binding and phosphorylation, leading to its degradation. Ubiquitinated by the ECS(SOCS7) complex in the cortical plate of the developing cerebral cortex following ligand-binding and phosphorylation by FYN, leading to its degradation by the proteasome. Recognized by ZSWIM8 through a disorder targets misorder mechanism that eliminates misfolded DAB1 via ubiquitination and proteasomal degradation. As to expression, expressed mainly in brain. Specifically expressin in cortical neurons.

Its subcellular location is the cytoplasm. Signaling adapter of the reelin-mediated signaling pathway, which regulates the migration and differentiation of postmitotic neurons during brain development. Mediates intracellular transduction of Reelin signaling following reelin (RELN)-binding to its receptor: acts by docking proteins through its phosphotyrosine residues and PID domain. This Mus musculus (Mouse) protein is Disabled homolog 1.